Here is a 638-residue protein sequence, read N- to C-terminus: Probable ATP-binding protein YheS (638 aa).

ABC transporter domains are found at residues 2-246 (IIFS…AQQT) and 313-531 (VMIE…STSE). ATP-binding positions include 34–41 (GKNGCGKS) and 349–356 (GKNGAGKS). The interval 525 to 563 (EQNSTSENKVSEKVGDNENSVQNRKEQKRREAELRQQTA) is disordered. Residues 547–558 (NRKEQKRREAEL) are compositionally biased toward basic and acidic residues.

Belongs to the ABC transporter superfamily. ABCF family. YheS subfamily.

Genetic data indicate it may be involved in ribosome assembly or function. In Haemophilus influenzae (strain ATCC 51907 / DSM 11121 / KW20 / Rd), this protein is Probable ATP-binding protein YheS.